The following is a 391-amino-acid chain: S-adenosylmethionine synthase (391 aa).

Position 14 (His14) interacts with ATP. Residue Asp16 participates in Mg(2+) binding. Glu42 lines the K(+) pocket. L-methionine-binding residues include Glu55 and Gln98. The segment at 98–108 (QSPDIAMGVDE) is flexible loop. ATP-binding positions include 172–174 (DGK), 238–239 (RF), Asp247, 253–254 (RK), Ala270, and Lys274. Residue Asp247 coordinates L-methionine. Position 278 (Lys278) interacts with L-methionine.

Belongs to the AdoMet synthase family. Homotetramer; dimer of dimers. Mg(2+) serves as cofactor. It depends on K(+) as a cofactor.

The protein resides in the cytoplasm. The catalysed reaction is L-methionine + ATP + H2O = S-adenosyl-L-methionine + phosphate + diphosphate. It participates in amino-acid biosynthesis; S-adenosyl-L-methionine biosynthesis; S-adenosyl-L-methionine from L-methionine: step 1/1. Its function is as follows. Catalyzes the formation of S-adenosylmethionine (AdoMet) from methionine and ATP. The overall synthetic reaction is composed of two sequential steps, AdoMet formation and the subsequent tripolyphosphate hydrolysis which occurs prior to release of AdoMet from the enzyme. This is S-adenosylmethionine synthase from Clostridium tetani (strain Massachusetts / E88).